The sequence spans 482 residues: Coagulation factor X (482 aa).

Positions 1-20 (MESPVRLSLLYVVLASLLLP) are cleaved as a signal peptide. The propeptide occupies 21-40 (GRSVFINRERANNVLQRIRR). Positions 41–85 (ANSFFEEIKKGNLERECVEEICSFEEAREVFEDNEKTTEFWNKYE) constitute a Gla domain. Glu46, Glu47, Glu54, Glu56, Glu59, Glu60, Glu65, Glu66, Glu69, Glu72, Glu75, and Glu79 each carry 4-carboxyglutamate. A disulfide bridge connects residues Cys57 and Cys62. The region spanning 86–122 (DGDQCESSPCQNQGECRDGLGSYTCTCTEGFEGKNCE) is the EGF-like 1; calcium-binding domain. 11 disulfides stabilise this stretch: Cys90/Cys101, Cys95/Cys110, Cys112/Cys121, Cys129/Cys140, Cys136/Cys149, Cys151/Cys164, Cys172/Cys340, Cys238/Cys243, Cys259/Cys275, Cys388/Cys402, and Cys413/Cys441. Asp103 is subject to (3R)-3-hydroxyaspartate. Positions 125-165 (VRKLCSLDNGDCDQFCREEQNSVVCSCAKGYFLGNDGKSCL) constitute an EGF-like 2 domain. The propeptide at 184–231 (VALNTSNSEPDPEDLMPDADILYPTESPSELLNLNKTEPEANSDDVIR) is activation peptide. 2 N-linked (GlcNAc...) asparagine glycosylation sites follow: Asn187 and Asn218. One can recognise a Peptidase S1 domain in the interval 232-465 (IVGGQECKRG…FLKWIDRSMK (234 aa)). Catalysis depends on charge relay system residues His274 and Asp320. Residue Ser417 is the Charge relay system of the active site.

Belongs to the peptidase S1 family. In terms of assembly, the two chains are formed from a single-chain precursor by the excision of two Arg residues and are held together by 1 or more disulfide bonds. Forms a heterodimer with SERPINA5. Interacts with ixolaris, an anticoagulant protein from Ixodes scapularis saliva. The vitamin K-dependent, enzymatic carboxylation of some glutamate residues allows the modified protein to bind calcium. Post-translationally, N- and O-glycosylated. In terms of processing, proteolytically cleaved and activated by cathepsin CTSG. The activation peptide is cleaved by factor IXa (in the intrinsic pathway), or by factor VIIa (in the extrinsic pathway). The iron and 2-oxoglutarate dependent 3-hydroxylation of aspartate and asparagine is (R) stereospecific within EGF domains. Plasma; synthesized in the liver.

It is found in the secreted. It carries out the reaction Selective cleavage of Arg-|-Thr and then Arg-|-Ile bonds in prothrombin to form thrombin.. Inhibited by SERPINA5. Its function is as follows. Factor Xa is a vitamin K-dependent glycoprotein that converts prothrombin to thrombin in the presence of factor Va, calcium and phospholipid during blood clotting. Factor Xa activates pro-inflammatory signaling pathways in a protease-activated receptor (PAR)-dependent manner. The polypeptide is Coagulation factor X (F10) (Rattus norvegicus (Rat)).